Reading from the N-terminus, the 174-residue chain is MMNNNGFSTGEEDSRGPADQICCLLDDGERCRKQAGNASYSKRIQKTVTQRRLKLSIDSHARHIYICDFHKARIQCARTKRRRRDSEDDSNETDTDLPEVDLYQLQVNTLRRYKRFYKVSTRPSSNKAQLSETIMKHFKTIPIKEKEILTYFIYMVKSNSNKLDQKNNASAEAT.

The segment at 22 to 70 (CCLLDDGERCRKQAGNASYSKRIQKTVTQRRLKLSIDSHARHIYICDFH) adopts an Atypical zinc-finger fold.

This sequence belongs to the SAP30 family. In terms of assembly, component of the class 1 Sin3-histone deacetylase complex (HDAC).

The protein resides in the nucleus. Required for the function of the class 1 Sin3-histone deacetylase complex (HDAC). This Anopheles gambiae (African malaria mosquito) protein is Histone deacetylase complex subunit SAP30 homolog.